The sequence spans 77 residues: Putative regulatory protein tsl2331 (77 aa).

This sequence belongs to the RemA family.

The polypeptide is Putative regulatory protein tsl2331 (Thermosynechococcus vestitus (strain NIES-2133 / IAM M-273 / BP-1)).